The sequence spans 811 residues: G-type lectin S-receptor-like serine/threonine-protein kinase LECRK3 (811 aa).

A signal peptide spans 1-23 (MAHLLFLPILQLLLLYCTKSAQA). The Bulb-type lectin domain occupies 24–153 (QLNISIGSSL…DGATKWESFG (130 aa)). Residues 24 to 464 (QLNISIGSSL…DKKYWILGSS (441 aa)) are Extracellular-facing. N-linked (GlcNAc...) asparagine glycans are attached at residues Asn-26, Asn-39, Asn-59, Asn-219, Asn-226, Asn-237, and Asn-242. Residues 292 to 344 (PENICQSIQTMVGSGACGFNSYCTIDGTKNTTSCLCPQNYKFIDDKRKYKGCR) form the EGF-like; atypical domain. Cystine bridges form between Cys-296–Cys-314, Cys-308–Cys-325, Cys-327–Cys-343, Cys-389–Cys-411, and Cys-393–Cys-399. Asn-321 carries an N-linked (GlcNAc...) asparagine glycan. The 79-residue stretch at 352 to 430 (CDLDETTAML…GKMDVNVPRT (79 aa)) folds into the PAN domain. The helical transmembrane segment at 465–485 (LLFGSSVLVNFLLISVMLFGT) threads the bilayer. Residues 486–811 (YCSITSRKKI…DPSSYISSLA (326 aa)) are Cytoplasmic-facing. Residues 521–795 (GGFQEVLGTG…KVTQMLDGAV (275 aa)) form the Protein kinase domain. ATP contacts are provided by residues 527–535 (LGTGASGVV) and Lys-551. Asp-645 (proton acceptor) is an active-site residue.

The protein belongs to the protein kinase superfamily. Ser/Thr protein kinase family.

The protein resides in the membrane. The catalysed reaction is L-seryl-[protein] + ATP = O-phospho-L-seryl-[protein] + ADP + H(+). It carries out the reaction L-threonyl-[protein] + ATP = O-phospho-L-threonyl-[protein] + ADP + H(+). Its function is as follows. Involved in resistance against the herbivorous insect brown planthopper (N.lugens, BPH). Member of the BPH3 (BPH resistance locus 3) cluster which contains LECRK1, LECRK2 and LECRK3. The polypeptide is G-type lectin S-receptor-like serine/threonine-protein kinase LECRK3 (Oryza sativa subsp. indica (Rice)).